A 553-amino-acid polypeptide reads, in one-letter code: Heterochromatin protein 1-binding protein 3 (553 aa).

Alanine 2 carries the post-translational modification N-acetylalanine. At serine 6 the chain carries Phosphoserine. The tract at residues 30–131 (LGEKADDSTM…SKEKEKKVKK (102 aa)) is disordered. Threonine 51 bears the Phosphothreonine mark. Residues 60–71 (GEEEKPEPDGSS) are compositionally biased toward acidic residues. Residue lysine 64 forms a Glycyl lysine isopeptide (Lys-Gly) (interchain with G-Cter in SUMO2) linkage. Phosphothreonine is present on threonine 85. Positions 91-127 (REAEQPKGEPESGEKEESKSAEETKKEEKDQSKEKEK) are enriched in basic and acidic residues. A Glycyl lysine isopeptide (Lys-Gly) (interchain with G-Cter in SUMO2) cross-link involves residue lysine 97. Phosphoserine occurs at positions 142, 155, and 156. An H15 1 domain is found at 157–232 (PRPKMDAILT…GASGSFVVVQ (76 aa)). The residue at position 190 (lysine 190) is an N6-acetyllysine. The tract at residues 231-251 (VQKSKTPQKSKNRKKGSAVDP) is disordered. A compositionally biased stretch (basic residues) spans 236 to 246 (TPQKSKNRKKG). Serine 247 bears the Phosphoserine mark. A PxVxL motif motif is present at residues 253-257 (PQVKL). 2 H15 domains span residues 253-328 (PQVK…QLKK) and 335-411 (LGGS…QLCF). A Glycyl lysine isopeptide (Lys-Gly) (interchain with G-Cter in SUMO2) cross-link involves residue lysine 256. A disordered region spans residues 422–553 (PKKVSDGSED…MKKKSFKTKK (132 aa)). The segment covering 428–449 (GSEDEDEEEDEEESSEDSEDEE) has biased composition (acidic residues). Phosphoserine is present on residues serine 441, serine 442, and serine 445. Composition is skewed to basic residues over residues 488–509 (GKVR…RKGR) and 542–553 (SAMKKKSFKTKK).

Interacts (via PxVxL motif) with CBX5.

It localises to the nucleus. The protein resides in the chromosome. Functionally, component of heterochromatin that maintains heterochromatin integrity during G1/S progression and regulates the duration of G1 phase to critically influence cell proliferative capacity. May play a role in hypoxia-induced oncogenesis. This is Heterochromatin protein 1-binding protein 3 (Hp1bp3) from Rattus norvegicus (Rat).